Here is a 150-residue protein sequence, read N- to C-terminus: D-aminoacyl-tRNA deacylase (150 aa).

Positions 136–137 (GP) match the Gly-cisPro motif, important for rejection of L-amino acids motif.

Belongs to the DTD family. In terms of assembly, homodimer.

The protein resides in the cytoplasm. The catalysed reaction is glycyl-tRNA(Ala) + H2O = tRNA(Ala) + glycine + H(+). The enzyme catalyses a D-aminoacyl-tRNA + H2O = a tRNA + a D-alpha-amino acid + H(+). In terms of biological role, an aminoacyl-tRNA editing enzyme that deacylates mischarged D-aminoacyl-tRNAs. Also deacylates mischarged glycyl-tRNA(Ala), protecting cells against glycine mischarging by AlaRS. Acts via tRNA-based rather than protein-based catalysis; rejects L-amino acids rather than detecting D-amino acids in the active site. By recycling D-aminoacyl-tRNA to D-amino acids and free tRNA molecules, this enzyme counteracts the toxicity associated with the formation of D-aminoacyl-tRNA entities in vivo and helps enforce protein L-homochirality. This chain is D-aminoacyl-tRNA deacylase, found in Staphylococcus saprophyticus subsp. saprophyticus (strain ATCC 15305 / DSM 20229 / NCIMB 8711 / NCTC 7292 / S-41).